Here is a 460-residue protein sequence, read N- to C-terminus: EPD1-interacting receptor-like cytoplasmic serine/threonine-protein kinase 5D (460 aa).

A Protein kinase domain is found at 83-364; it reads FSSANFLGEG…DVVNILEPLL (282 aa). Residues 89–97 and lysine 118 contribute to the ATP site; that span reads LGEGGFGPV. Phosphotyrosine occurs at positions 163 and 165. Residue aspartate 213 is the Proton acceptor of the active site.

Belongs to the protein kinase superfamily. Ser/Thr protein kinase family. In terms of assembly, interacts with the V.dahliae elicitor EPD1 (AC G2WWH6). In terms of processing, phosphorylated at Tyr-163 and Tyr-165 in the presence of pathogen-associated molecular patterns (PAMPs); this triggers the expression of pathogenesis-related genes. As to expression, mostly expressed in roots and, to a lesser extent, in leaves.

It is found in the cell membrane. The catalysed reaction is L-seryl-[protein] + ATP = O-phospho-L-seryl-[protein] + ADP + H(+). The enzyme catalyses L-threonyl-[protein] + ATP = O-phospho-L-threonyl-[protein] + ADP + H(+). In terms of biological role, required for pathogen-associated molecular pattern (PAMP, e.g. chitin and flg22)-triggered immunity (PTI) involving reactive oxygen species (ROS) accumulation and triggering plant defense, including defense-related gene expression (e.g. PR1 and LOX). Ensures specific recognition of the EPD1 effector of Verticillium dahliae, resulting in a hypersensitive response known as effector-triggered immunity (ETI), characterized by the activation of programmed cell death to limit infection by the pathogen. Priming plants with the incompatible pathogen V.dahliae leads to an increased resistance to compatible pathogens, as a result of systemic acquired resistance (SAR). In Gossypium barbadense (Sea Island cotton), this protein is EPD1-interacting receptor-like cytoplasmic serine/threonine-protein kinase 5D.